A 1068-amino-acid polypeptide reads, in one-letter code: WD repeat-containing protein on Y chromosome (1068 aa).

WD repeat units follow at residues 155–199 (DEVT…IRTA), 201–242 (SESI…RGPF), 322–361 (RIPL…EPSA), 365–404 (GHNG…LLQT), 455–494 (THAA…RKII), 507–546 (IIDI…VVRN), and 594–634 (FHTD…RRYS). A disordered region spans residues 657 to 687 (SKRLASRPTPGNHGLQMGRAGRSTVLNRPED). WD repeat units lie at residues 746–785 (KTGD…VPET) and 829–868 (GHLK…LGTL). Residues 1026–1068 (SAINIKQPSRRRSDKTNDTRNVRTPRARDLIALEMSSSHASQS) form a disordered region. Basic and acidic residues predominate over residues 1039–1056 (DKTNDTRNVRTPRARDLI).

In Drosophila yakuba (Fruit fly), this protein is WD repeat-containing protein on Y chromosome.